A 667-amino-acid chain; its full sequence is Polypeptide N-acetylgalactosaminyltransferase 3 (667 aa).

The Cytoplasmic portion of the chain corresponds to 1–12 (MGLRFQQLKKLW). Residues 13–35 (LLYLFLLFFAFFMFAISINLYVA) traverse the membrane as a helical; Signal-anchor for type II membrane protein segment. Residues 36–667 (SIQGGDAEMR…WGFIPLPWRM (632 aa)) are Lumenal-facing. 2 N-linked (GlcNAc...) asparagine glycosylation sites follow: asparagine 75 and asparagine 129. 5 cysteine pairs are disulfide-bonded: cysteine 140-cysteine 375, cysteine 366-cysteine 446, cysteine 526-cysteine 547, cysteine 572-cysteine 601, and cysteine 626-cysteine 649. The segment at 149-259 (LPSTSVIIVF…RGWLEPLLSR (111 aa)) is catalytic subdomain A. The substrate site is built by aspartate 190 and arginine 220. Aspartate 243 and histidine 245 together coordinate Mn(2+). N-linked (GlcNAc...) asparagine glycans are attached at residues asparagine 279 and asparagine 313. Residues 321 to 383 (PIATPGMAGG…PCSHVGHVFR (63 aa)) form a catalytic subdomain B region. A substrate-binding site is contributed by tryptophan 352. A Mn(2+)-binding site is contributed by histidine 380. Substrate-binding residues include arginine 383 and tyrosine 388. Asparagine 433 is a glycosylation site (N-linked (GlcNAc...) asparagine). Residues 513 to 661 (EELMALIDLE…KDITQKWGFI (149 aa)) form the Ricin B-type lectin domain. Asparagine 590 carries N-linked (GlcNAc...) asparagine glycosylation.

Belongs to the glycosyltransferase 2 family. GalNAc-T subfamily. Requires Mn(2+) as cofactor. In terms of tissue distribution, expressed in developing oocytes and egg chambers. During embryonic stages 9-11, expressed in the primordiums of the foregut, midgut and hindgut. During embryonic stages 12-13, expression is found uniquely in the posterior spiracle. During embryonic stages 14-17, expressed in the pharynx, esophagus and posterior spiracles. Expression observed in the epidermis during embryonic stages 16-17. In third instar larvae, expressed ubiquitously in wing, with increased expression in pleura and notum, eye-antennal, leg and haltere imaginal disks.

It localises to the golgi apparatus membrane. The catalysed reaction is L-seryl-[protein] + UDP-N-acetyl-alpha-D-galactosamine = a 3-O-[N-acetyl-alpha-D-galactosaminyl]-L-seryl-[protein] + UDP + H(+). The enzyme catalyses L-threonyl-[protein] + UDP-N-acetyl-alpha-D-galactosamine = a 3-O-[N-acetyl-alpha-D-galactosaminyl]-L-threonyl-[protein] + UDP + H(+). The protein operates within protein modification; protein glycosylation. Its function is as follows. Catalyzes the initial reaction in O-linked oligosaccharide biosynthesis, the transfer of an N-acetyl-D-galactosamine residue to a serine or threonine residue on the protein receptor. It can both act as a peptide transferase that transfers GalNAc onto unmodified peptide substrates, and as a glycopeptide transferase that requires the prior addition of a GalNAc on a peptide before adding additional GalNAc moieties. Prefers EA2 as substrate. Has weak activity toward Muc5AC-3, -13 and -3/13 substrates. Plays a critical role in the regulation of integrin-mediated cell adhesion during wing development by influencing, via glycosylation, the secretion and localization of the integrin ligand Tig to the basal cell layer interface. Might have a role in protein O-glycosylation in the Golgi and thereby in establishing and/or maintaining a proper secretory apparatus structure. Together with Pgant35A, regulates integrin levels and activity-dependent integrin signaling at the synapse in neurons and muscles. The protein is Polypeptide N-acetylgalactosaminyltransferase 3 of Drosophila melanogaster (Fruit fly).